We begin with the raw amino-acid sequence, 155 residues long: FUN14 domain-containing protein 1 (155 aa).

At Met-1–Lys-47 the chain is on the cytoplasmic side. Ser-13 carries the phosphoserine; by CK2 modification. The residue at position 17 (Ser-17) is a Phosphoserine; by ULK1. Tyr-18 is modified (phosphotyrosine; by SRC). The YXXL motif lies at Tyr-18–Leu-21. Residues Tyr-48–Phe-68 traverse the membrane as a helical segment. The Mitochondrial intermembrane segment spans residues Gln-69–Leu-74. Residues Ala-75–Val-95 form a helical membrane-spanning segment. The Cytoplasmic segment spans residues Gln-96–Glu-133. Lys-119 participates in a covalent cross-link: Glycyl lysine isopeptide (Lys-Gly) (interchain with G-Cter in ubiquitin). Residues Phe-134 to Ala-154 form a helical membrane-spanning segment. Ser-155 is a topological domain (mitochondrial intermembrane).

This sequence belongs to the FUN14 family. Interacts (via YXXL motif) with MAP1 LC3 family proteins MAP1LC3A, MAP1LC3B and GABARAP. Interacts with DNM1L/DPR1. Interacts with GPX4. Phosphorylation at Ser-13 by CK2 and at Tyr-18 by SRC inhibits activation of mitophagy. Following hypoxia, dephosphorylated at Tyr-18, leading to interaction with MAP1 LC3 family proteins and triggering mitophagy. Dephosphorylation is mediated by PGAM5. Phosphorylated by ULK1 at Ser-17 which enhances FUNDC1 binding to LC3. Post-translationally, ubiquitinated on Lys-119. Deubiquitinated by USP19; leading to hypoxia-induced DRP1 oligomerization and GTPase activity. In terms of tissue distribution, widely expressed.

The protein resides in the mitochondrion outer membrane. Its function is as follows. Integral mitochondrial outer-membrane protein that mediates the formation of mitochondria-associated endoplasmic reticulum membranes (MAMs). In turn, mediates angiogenesis and neoangiogenesis through interference with intracellular Ca(2+) communication and regulation of the vascular endothelial growth factor receptor KDR/VEGFR2 expression at both mRNA and protein levels. Also acts as an activator of hypoxia-induced mitophagy, an important mechanism for mitochondrial quality and homeostasis, by interacting with and recruiting LC3 protein family to mitochondria. Mechanistically, recruits DRP1 at ER-mitochondria contact sites leading to DRP1 oligomerization and GTPase activity to facilitate mitochondrial fission during hypoxia. Additionally, plays a role in hepatic ferroptosis by interacting directly with glutathione peroxidase/GPX4 to facilitate its recruitment into mitochondria through TOM/TIM complex where it is degraded by mitophagy. The sequence is that of FUN14 domain-containing protein 1 (FUNDC1) from Homo sapiens (Human).